The chain runs to 654 residues: Myrosinase-binding protein 2 (654 aa).

4 Jacalin-type lectin domains span residues 2-151 (SEKV…HFFA), 156-291 (LKHF…HFAP), 346-489 (PNKV…YFAP), and 502-645 (AKKL…HAVP). Positions 314–346 (VPAPSPAPAPSPAPAPAPAPAPAPTPAPAPAPP) are enriched in pro residues. Positions 314–355 (VPAPSPAPAPSPAPAPAPAPAPAPTPAPAPAPPNKVEALGGN) are disordered.

Belongs to the jacalin lectin family. In terms of tissue distribution, expressed in flowers. Detected mainly in ovules and styles of immature flowers, but also in pistils, styles, stamens, petals and embryos. Not detected in leaves.

The protein is Myrosinase-binding protein 2 (MBP2) of Arabidopsis thaliana (Mouse-ear cress).